The primary structure comprises 518 residues: DNA-binding protein D-ETS-4 (518 aa).

2 disordered regions span residues 74–113 (SQPIQQQQQPTAPYTNPSSHQLIPPPAYPHSAYPSPQSSP) and 152–172 (LPPSPPESNCETPSPRSSCGE). Residues 84 to 94 (TAPYTNPSSHQ) are compositionally biased toward polar residues. A compositionally biased stretch (low complexity) spans 102–113 (PHSAYPSPQSSP). The span at 158-171 (ESNCETPSPRSSCG) shows a compositional bias: polar residues. Residues 258 to 344 (HAKREADAIC…AQLEIWKMAY (87 aa)) enclose the PNT domain. The segment at 393 to 426 (APLNGSTTSPPATNASNGGTATVKRPNGGRTGGG) is disordered. A compositionally biased stretch (polar residues) spans 396–412 (NGSTTSPPATNASNGGT). Positions 430 to 513 (IHLWQFLKEL…RSQRLVYQFC (84 aa)) form a DNA-binding region, ETS.

This sequence belongs to the ETS family. Transient high expression in pole cells during embryonic stages 8-11.

The protein resides in the nucleus. May have a role in germline development. The chain is DNA-binding protein D-ETS-4 (Ets98B) from Drosophila melanogaster (Fruit fly).